We begin with the raw amino-acid sequence, 496 residues long: Glycine receptor subunit beta (496 aa).

The N-terminal stretch at 1–22 (MKFSLAISFFILMSLLFEDACA) is a signal peptide. Residues 23–268 (KEKSSKKGKG…IFTLRRQVGF (246 aa)) lie on the Extracellular side of the membrane. The segment at 32 to 53 (GKKKQYLCPSQQSPEDLARVPP) is disordered. Asn-54 carries an N-linked (GlcNAc...) asparagine glycan. Glycine is bound by residues Arg-108 and Ser-174. A disulfide bridge connects residues Cys-183 and Cys-197. A glycan (N-linked (GlcNAc...) asparagine) is linked at Asn-242. An intrachain disulfide couples Cys-243 to Cys-255. Glycine is bound at residue Thr-250. The helical transmembrane segment at 269-289 (YMMGVYAPTLLIVVLSWLSFW) threads the bilayer. Residues 290–294 (INPDA) are Cytoplasmic-facing. A helical transmembrane segment spans residues 295–315 (SAARVPLGIFSVLSLASECTT). Topologically, residues 316–327 (LAAELPKVSYVK) are extracellular. The chain crosses the membrane as a helical span at residues 328–349 (ALDVWLIACLLFGFASLVEYAV). Residues 350 to 471 (VQVMLNNPKR…KPVIPTAAKR (122 aa)) are Cytoplasmic-facing. Thr-391 is subject to Phosphothreonine. A helical membrane pass occupies residues 472 to 495 (IDLYARALFPFCFLFFNVIYWSIY). A topological domain (extracellular) is located at residue Leu-496.

The protein belongs to the ligand-gated ion channel (TC 1.A.9) family. Glycine receptor (TC 1.A.9.3) subfamily. GLRB sub-subfamily. As to quaternary structure, forms heteropentamers with glycin receptor alpha subunits. Heteropentamers with GLRA1 can be composed of two GLRA1 and three GLRB subunits, or three GLRA1 and two GLRB subunits, or four GLRA1 subunits and one GLRB subunit. Forms heteropentamers with GLRA2. Functional GLRB-GLRA2 heteropentamers contain four GLRA2 subunits and one GLRB subunit, although alternative subunit composition cannot be excluded. Forms a heteropentamer with GLRA3. Interacts with GPHN. Detected in spinal cord, brain and brain stem, especially in the periolivary region, spinal nuclei, trigeminal nucleus, medulla oblongata, pons and midbrain. Detected in the inner plexiform layer of the retina (at protein level). High levels of expression in cortex, hippocampus, thalamus and cerebellum. Detected in spinal cord.

It localises to the postsynaptic cell membrane. It is found in the synapse. The protein resides in the cell projection. Its subcellular location is the dendrite. The protein localises to the cell membrane. It localises to the cytoplasm. The enzyme catalyses chloride(in) = chloride(out). Its activity is regulated as follows. Channel opening is triggered by extracellular glycine. Heteropentameric channels composed of GLRB and GLRA1 are activated by lower glycine levels than homopentameric GLRA1. In terms of biological role, subunit of heteromeric glycine-gated chloride channels. Plays an important role in the down-regulation of neuronal excitability. Contributes to the generation of inhibitory postsynaptic currents. The sequence is that of Glycine receptor subunit beta (Glrb) from Mus musculus (Mouse).